The chain runs to 230 residues: 2-amino-5-formylamino-6-ribosylaminopyrimidin-4(3H)-one 5'-monophosphate deformylase (230 aa).

Fe cation is bound by residues glutamate 29, histidine 31, aspartate 40, and histidine 109.

This sequence belongs to the creatininase superfamily. FAPy deformylase family. Homodimer. Fe(2+) is required as a cofactor. It depends on Zn(2+) as a cofactor.

The catalysed reaction is 2-amino-5-formylamino-6-(5-phospho-D-ribosylamino)pyrimidin-4(3H)-one + H2O = 2,5-diamino-6-(1-D-ribosylamino)pyrimidin-4(3H)-one 5'-phosphate + formate + H(+). The protein operates within cofactor biosynthesis; coenzyme F420 biosynthesis. Its pathway is cofactor biosynthesis; riboflavin biosynthesis. Catalyzes the hydrolysis of the formamide of 2-amino-5-formylamino-6-ribosylamino-4(3H)-pyrimidinone 5'-monophosphate (FAPy) to form 2,5-diamino-6-ribosylamino-4(3H)-pyrimidinone 5'-phosphate (APy). The protein is 2-amino-5-formylamino-6-ribosylaminopyrimidin-4(3H)-one 5'-monophosphate deformylase of Methanobrevibacter smithii (strain ATCC 35061 / DSM 861 / OCM 144 / PS).